The chain runs to 237 residues: Octopine transport system permease protein OccQ (237 aa).

The ABC transmembrane type-1 domain maps to 22–222; the sequence is TAMTMAVAFS…LITFVSGQVF (201 aa). 4 helical membrane passes run 26–46, 72–92, 96–116, and 202–222; these read MAVA…GAAA, LVIY…ASLF, GFVG…VSGA, and SFYL…GQVF.

The protein belongs to the binding-protein-dependent transport system permease family. HisMQ subfamily.

The protein localises to the cell inner membrane. Functionally, component of the octopine active transport system probably consisting of four subunits: Q, M, P and T. In Agrobacterium tumefaciens (strain Ach5), this protein is Octopine transport system permease protein OccQ (occQ).